Here is a 592-residue protein sequence, read N- to C-terminus: Testis-specific serine kinase substrate (592 aa).

At serine 217 the chain carries Phosphoserine. Positions glutamine 232–arginine 308 are disordered. The segment covering glutamate 234–proline 264 has biased composition (basic and acidic residues). The span at serine 269–glycine 281 shows a compositional bias: polar residues. Serine 288 carries the post-translational modification Phosphoserine; by TSSK1 and TSSK2. A Phosphoserine modification is found at serine 316. The interval leucine 566–glutamine 592 is disordered.

Phosphorylated on serine residue(s) by STK22A/TSSK1 and STK22B/TSSK2. In terms of tissue distribution, highly expressed in testis. Expressed at low levels in prostate, female breast, placenta, ovary and thymus.

It localises to the cytoplasm. The protein localises to the cytoskeleton. The protein resides in the microtubule organizing center. Its subcellular location is the centrosome. It is found in the centriole. In terms of biological role, may play a role in testicular physiology, most probably in the process of spermatogenesis or spermatid development. In Homo sapiens (Human), this protein is Testis-specific serine kinase substrate (TSKS).